Consider the following 545-residue polypeptide: Glucose-6-phosphate isomerase (545 aa).

The active-site Proton donor is Glu-351. Active-site residues include His-382 and Lys-510.

The protein belongs to the GPI family.

It is found in the cytoplasm. It carries out the reaction alpha-D-glucose 6-phosphate = beta-D-fructose 6-phosphate. It functions in the pathway carbohydrate biosynthesis; gluconeogenesis. Its pathway is carbohydrate degradation; glycolysis; D-glyceraldehyde 3-phosphate and glycerone phosphate from D-glucose: step 2/4. Its function is as follows. Catalyzes the reversible isomerization of glucose-6-phosphate to fructose-6-phosphate. The polypeptide is Glucose-6-phosphate isomerase (Helicobacter pylori (strain Shi470)).